A 359-amino-acid chain; its full sequence is 4-galactosyl-N-acetylglucosaminide 3-alpha-L-fucosyltransferase FUT6 (359 aa).

The Cytoplasmic portion of the chain corresponds to 1 to 14 (MDPLGPAKPQWSCR). Residues 15 to 34 (CCLTTLLFQLLVAVCFFSYL) form a helical; Signal-anchor for type II membrane protein membrane-spanning segment. The Lumenal segment spans residues 35 to 359 (RVSRDDPTVY…QTRSITAWFT (325 aa)). N-linked (GlcNAc...) asparagine glycans are attached at residues N46, N91, N153, and N184. A determines site-specific fucosylation region spans residues 73 to 112 (KPTALPRCSEMLPGTADCNITADRKVYPQADAVIVHHREV).

It belongs to the glycosyltransferase 10 family. Homodimer and monomer. Monomer (secreted form). In terms of processing, N-glycosylated. Proteolytic cleavage releases a secreted glycoform of 43 kDa.

It localises to the golgi apparatus. The protein resides in the golgi stack membrane. The protein localises to the secreted. It catalyses the reaction a beta-D-galactosyl-(1-&gt;4)-N-acetyl-beta-D-glucosaminyl derivative + GDP-beta-L-fucose = a beta-D-galactosyl-(1-&gt;4)-[alpha-L-fucosyl-(1-&gt;3)]-N-acetyl-beta-D-glucosaminyl derivative + GDP + H(+). It carries out the reaction an N-acetyl-alpha-neuraminyl-(2-&gt;3)-beta-D-galactosyl-(1-&gt;4)-N-acetyl-beta-D-glucosaminyl derivative + GDP-beta-L-fucose = an alpha-Neu5Ac-(2-&gt;3)-beta-D-Gal-(1-&gt;4)-[alpha-L-Fuc-(1-&gt;3)]-beta-D-GlcNAc derivative + GDP + H(+). The catalysed reaction is an alpha-Neu5Ac-(2-&gt;3)-beta-D-Gal-(1-&gt;4)-beta-D-GlcNAc-(1-&gt;3)-beta-D-Gal-(1-&gt;4)-[alpha-L-Fuc-(1-&gt;3)]-beta-D-GlcNAc derivative + GDP-beta-L-fucose = an alpha-Neu5Ac-(2-&gt;3)-beta-D-Gal-(1-&gt;4)-[alpha-L-Fuc-(1-&gt;3)]-beta-D-GlcNAc-(1-&gt;3)-beta-D-Gal-(1-&gt;4)-[alpha-L-Fuc-(1-&gt;3)]-beta-D-GlcNAc derivative + GDP + H(+). The enzyme catalyses a neolactoside nLc6Cer + GDP-beta-L-fucose = beta-D-Gal-(1-&gt;4)-[alpha-L-Fuc-(1-&gt;3)]-beta-D-GlcNAc-(1-&gt;3)-beta-D-Gal-(1-&gt;4)-beta-D-GlcNAc-(1-&gt;3)-beta-D-Gal-(1-&gt;4)-beta-D-Glc-(1&lt;-&gt;1')-Cer + GDP + H(+). It catalyses the reaction a neolactoside nLc6Cer + GDP-beta-L-fucose = beta-D-galactosyl-(1-&gt;4)-N-acetyl-beta-D-glucosaminyl-(1-&gt;3)-beta-D-galactosyl-(1-&gt;4)-[alpha-L-fucosyl-(1-&gt;3)]-N-acetyl-beta-D-glucosaminyl-(1-&gt;3)-beta-D-galactosyl-(1-&gt;4)-beta-D-glucosyl-(1&lt;-&gt;1')-ceramide + GDP + H(+). It carries out the reaction a neolactoside VI(3)-alpha-NeuNAc-nLc6Cer + GDP-beta-L-fucose = a neolactoside VI(3)-alpha-NeuAc,V(3)-alphaFuc-nLc6Cer + GDP + H(+). The catalysed reaction is beta-D-galactosyl-(1-&gt;4)-N-acetyl-D-glucosamine + GDP-beta-L-fucose = beta-D-galactosyl-(1-&gt;4)-[alpha-L-fucosyl-(1-&gt;3)]-N-acetyl-D-glucosamine + GDP + H(+). The enzyme catalyses N-acetyl-alpha-neuraminosyl-(2-&gt;3)-beta-D-galactosyl-(1-&gt;4)-N-acetyl-beta-D-glucosamine + GDP-beta-L-fucose = N-acetyl-alpha-neuraminosyl-(2-&gt;3)-beta-D-galactosyl-(1-&gt;4)-[alpha-L-fucosyl-(1-&gt;3)]-N-acetyl-beta-D-glucosamine + GDP + H(+). It catalyses the reaction lactose + GDP-beta-L-fucose = beta-D-galactosyl-(1-&gt;4)-[alpha-L-fucosyl-(1-&gt;3)]-D-glucose + GDP + H(+). It carries out the reaction alpha-L-Fuc-(1-&gt;2)-beta-D-Gal-(1-&gt;4)-D-Glc + GDP-beta-L-fucose = alpha-L-Fuc-(1-&gt;2)-beta-D-Gal-(1-&gt;4)-[alpha-L-Fuc-(1-&gt;3)]-D-Glc + GDP + H(+). The catalysed reaction is a beta-D-galactosyl-(1-&gt;4)-N-acetyl-beta-D-6-sulfooxy-glucosaminyl derivative + GDP-beta-L-fucose = a beta-D-galactosyl-(1-&gt;4)-[alpha-L-fucosyl-(1-&gt;3)]-N-acetyl-beta-D-6-sulfooxy-glucosaminyl derivative + GDP + H(+). It participates in protein modification; protein glycosylation. Catalyzes the transfer of L-fucose, from a guanosine diphosphate-beta-L-fucose, to the N-acetyl glucosamine (GlcNAc) of a distal alpha2,3 sialylated lactosamine unit of a glycoprotein- or glycolipid-linked sialopolylactosamines chain or of a distal or internal lactosamine unit of a neutral glycoprotein- or glycolipid-linked polylactosamines chain through an alpha-1,3 glycosidic linkage and participates in surface expression of the sialyl Lewis X (sLe(x)), Lewis X (Le(x)) and non sialylated VIM2 determinants. Moreover transfers fucose to H-type 2 (Fucalpha1-2Galbeta1-4GlcNAc) chain acceptor substrates and participates in difucosylated sialyl Lewis x determinants. Also fucosylates a polylactosamine substrate having a 6 sulfate modification at the GlcNAc moiety and gives rise to sialyl and non-sialyl 6-sulfo lewis X. Does not have activity towards type 1 ((Galbeta1-3GlcNAc)) and H-type 1 chain (Fucalpha1-2Galbeta1-3GlcNAc) acceptors substrates. The polypeptide is 4-galactosyl-N-acetylglucosaminide 3-alpha-L-fucosyltransferase FUT6 (Gorilla gorilla gorilla (Western lowland gorilla)).